The following is a 76-amino-acid chain: Large ribosomal subunit protein bL31 (76 aa).

Belongs to the bacterial ribosomal protein bL31 family. Type A subfamily. Part of the 50S ribosomal subunit.

Functionally, binds the 23S rRNA. This Methylocella silvestris (strain DSM 15510 / CIP 108128 / LMG 27833 / NCIMB 13906 / BL2) protein is Large ribosomal subunit protein bL31.